Reading from the N-terminus, the 293-residue chain is tRNA (guanine-N(7)-)-methyltransferase (293 aa).

Basic and acidic residues predominate over residues 1-31 (MGGDKIKKDKRQKREDYRAAMRKDDISELPR). 2 disordered regions span residues 1–33 (MGGD…PRKK) and 68–97 (IVDE…TPLR). Pro residues predominate over residues 75 to 85 (TSPPPPPPVPE). S-adenosyl-L-methionine-binding positions include Gly111, 134–135 (EI), 169–170 (NT), and Cys189. Residue Asp192 is part of the active site. Position 267–269 (267–269 (TEE)) interacts with S-adenosyl-L-methionine.

It belongs to the class I-like SAM-binding methyltransferase superfamily. TrmB family. Forms a complex with TRM82.

The protein localises to the nucleus. The enzyme catalyses guanosine(46) in tRNA + S-adenosyl-L-methionine = N(7)-methylguanosine(46) in tRNA + S-adenosyl-L-homocysteine. It functions in the pathway tRNA modification; N(7)-methylguanine-tRNA biosynthesis. In terms of biological role, catalyzes the formation of N(7)-methylguanine at position 46 (m7G46) in tRNA. This Chaetomium globosum (strain ATCC 6205 / CBS 148.51 / DSM 1962 / NBRC 6347 / NRRL 1970) (Soil fungus) protein is tRNA (guanine-N(7)-)-methyltransferase.